Here is a 267-residue protein sequence, read N- to C-terminus: Dichloromethane dehalogenase (267 aa).

One can recognise a GST N-terminal domain in the interval 3–85 (TKLRYLHHPA…YLSEKYDCSS (83 aa)). The 134-residue stretch at 91–224 (TLEERGHIQQ…AWQYENVRKY (134 aa)) folds into the GST C-terminal domain.

It belongs to the GST superfamily. As to quaternary structure, homohexamer.

Its subcellular location is the cytoplasm. It carries out the reaction dichloromethane + H2O = formaldehyde + 2 chloride + 2 H(+). Its pathway is xenobiotic degradation; dichloromethane degradation. This is Dichloromethane dehalogenase (dcmA) from Methylophilus leisingeri (strain DSM 6813 / VKM B-2013 / DM11).